Here is a 315-residue protein sequence, read N- to C-terminus: Olfactory receptor 10H5 (315 aa).

Residues 1–25 (MQGLNHTSVSEFILVGFSAFPHLQL) lie on the Extracellular side of the membrane. N5 carries an N-linked (GlcNAc...) asparagine glycan. The helical transmembrane segment at 26–46 (MLFLLFLLMYLFTLLGNLLIM) threads the bilayer. The Cytoplasmic segment spans residues 47 to 54 (ATVWSERS). Residues 55 to 75 (LHMPMYLFLCALSITEILYTV) form a helical membrane-spanning segment. Over 76 to 99 (AIIPRMLADLLSTQRSIAFLACAS) the chain is Extracellular. C97 and C189 are joined by a disulfide. A helical transmembrane segment spans residues 100 to 120 (QMFFSFSFGFTHSFLLTVMGY). Over 121 to 139 (DRYVAICHPLRYNVLMSLR) the chain is Cytoplasmic. The helical transmembrane segment at 140–160 (GCTCRVGCSWAGGLVMGMVVT) threads the bilayer. At 161-197 (SAIFHLAFCGHKEIHHFFCHVPPLLKLACGDDVLVVA) the chain is on the extracellular side. Residues 198 to 218 (KGVGLVCITALLGCFLLILLS) traverse the membrane as a helical segment. The Cytoplasmic segment spans residues 219–238 (YAFIVAAILKIPSAEGRNKA). Residues 239–259 (FSTCASHLTVVVVHYGFASVI) form a helical membrane-spanning segment. Over 260-272 (YLKPKGPQSPEGD) the chain is Extracellular. Residues 273-293 (TLMGITYTVLTPFLSPIIFSL) traverse the membrane as a helical segment. Topologically, residues 294-315 (RNKELKVAMKKTCFTKLFPQNC) are cytoplasmic.

This sequence belongs to the G-protein coupled receptor 1 family.

It is found in the cell membrane. Its function is as follows. Odorant receptor. This chain is Olfactory receptor 10H5 (OR10H5), found in Homo sapiens (Human).